The sequence spans 485 residues: Glutamyl-tRNA(Gln) amidotransferase subunit A (485 aa).

Catalysis depends on charge relay system residues K76 and S151. S175 serves as the catalytic Acyl-ester intermediate.

The protein belongs to the amidase family. GatA subfamily. Heterotrimer of A, B and C subunits.

The enzyme catalyses L-glutamyl-tRNA(Gln) + L-glutamine + ATP + H2O = L-glutaminyl-tRNA(Gln) + L-glutamate + ADP + phosphate + H(+). Allows the formation of correctly charged Gln-tRNA(Gln) through the transamidation of misacylated Glu-tRNA(Gln) in organisms which lack glutaminyl-tRNA synthetase. The reaction takes place in the presence of glutamine and ATP through an activated gamma-phospho-Glu-tRNA(Gln). The protein is Glutamyl-tRNA(Gln) amidotransferase subunit A of Thiobacillus denitrificans (strain ATCC 25259 / T1).